A 565-amino-acid polypeptide reads, in one-letter code: Thiol:disulfide interchange protein DsbD (565 aa).

The first 19 residues, 1 to 19 (MAQRIFTLILLLCSTSVFA), serve as a signal peptide directing secretion. 2 cysteine pairs are disulfide-bonded: C122/C128 and C182/C304. Transmembrane regions (helical) follow at residues 163–183 (LPFS…TPCV), 208–228 (LLTF…GLVV), 243–263 (YVLI…FGLF), 289–309 (GVFI…TAPL), 323–343 (WLGG…LMLI), 357–377 (WMEQ…VFLL), and 384–404 (IWGL…AFIT). Positions 434 to 565 (WAFGETHTAQ…FSAHLRDRQP (132 aa)) constitute a Thioredoxin domain. A disulfide bond links C480 and C483.

The protein belongs to the thioredoxin family. DsbD subfamily.

Its subcellular location is the cell inner membrane. It catalyses the reaction [protein]-dithiol + NAD(+) = [protein]-disulfide + NADH + H(+). It carries out the reaction [protein]-dithiol + NADP(+) = [protein]-disulfide + NADPH + H(+). Required to facilitate the formation of correct disulfide bonds in some periplasmic proteins and for the assembly of the periplasmic c-type cytochromes. Acts by transferring electrons from cytoplasmic thioredoxin to the periplasm. This transfer involves a cascade of disulfide bond formation and reduction steps. The polypeptide is Thiol:disulfide interchange protein DsbD (Escherichia coli O6:K15:H31 (strain 536 / UPEC)).